The primary structure comprises 163 residues: Phosphopantetheine adenylyltransferase (163 aa).

Ser-10 and His-18 together coordinate ATP. Ser-10 serves as a coordination point for substrate. Substrate-binding residues include Lys-42, Thr-75, and Arg-89. ATP-binding positions include 90–92 (GIR), Glu-100, and 125–131 (YAHVSSS).

Belongs to the bacterial CoaD family. As to quaternary structure, homohexamer. The cofactor is Mg(2+).

It is found in the cytoplasm. It catalyses the reaction (R)-4'-phosphopantetheine + ATP + H(+) = 3'-dephospho-CoA + diphosphate. It functions in the pathway cofactor biosynthesis; coenzyme A biosynthesis; CoA from (R)-pantothenate: step 4/5. In terms of biological role, reversibly transfers an adenylyl group from ATP to 4'-phosphopantetheine, yielding dephospho-CoA (dPCoA) and pyrophosphate. This chain is Phosphopantetheine adenylyltransferase, found in Enterococcus faecalis (strain ATCC 700802 / V583).